The sequence spans 407 residues: Substance-P receptor (407 aa).

The Extracellular segment spans residues 1–31 (MDNVLPGDSDLFPNISTNSSESNQFVQPAWQ). N-linked (GlcNAc...) asparagine glycosylation is found at N14 and N18. A helical transmembrane segment spans residues 32–54 (IVLWAAAYTVIVVTSVVGNVVVM). At 55–64 (WIILAHKRMR) the chain is on the cytoplasmic side. A helical transmembrane segment spans residues 65-86 (TVTNYFLVNLAFAEASMAAFNT). Residues 87-106 (VVNFTYAVHNEWYYGLFYCK) lie on the Extracellular side of the membrane. The N-linked (GlcNAc...) asparagine glycan is linked to N89. C105 and C180 are disulfide-bonded. The helical transmembrane segment at 107 to 128 (FHNFFPIAAVFASIYSMTAVAF) threads the bilayer. At 129 to 148 (DRYMAIIHPLQPRLSATATK) the chain is on the cytoplasmic side. Residues 149–169 (VVIFVIWVLALLLAFPQGYYS) form a helical membrane-spanning segment. Residues 170–194 (TTETMPGRVVCMIEWPEHPNRTYEK) lie on the Extracellular side of the membrane. The N-linked (GlcNAc...) asparagine glycan is linked to N189. A helical membrane pass occupies residues 195–219 (AYHICVTVLIYFLPLLVIGYAYTVV). Residues 220–248 (GITLWASEIPGDSSDRYHEQVSAKRKVVK) are Cytoplasmic-facing. Residues 249–270 (MMIVVVCTFAICWLPFHVFFLL) form a helical membrane-spanning segment. Topologically, residues 271 to 283 (PYINPDLYVKKFI) are extracellular. A helical membrane pass occupies residues 284–308 (QQVYLAIMWLAMSSTMYNPIIYCCL). Residues 309 to 407 (NDRFRLGFKH…SSSFYSNMLA (99 aa)) are Cytoplasmic-facing. C322 is lipidated: S-palmitoyl cysteine. The interval 365 to 407 (HEDEAEEGPKATPSSLDLTSNGSSRSNSKTMTESSSFYSNMLA) is disordered. Residues 376–407 (TPSSLDLTSNGSSRSNSKTMTESSSFYSNMLA) are compositionally biased toward polar residues.

This sequence belongs to the G-protein coupled receptor 1 family. In terms of assembly, interacts with ARRB1.

The protein localises to the cell membrane. This is a receptor for the tachykinin neuropeptide substance P. It is probably associated with G proteins that activate a phosphatidylinositol-calcium second messenger system. The chain is Substance-P receptor (TACR1) from Meriones unguiculatus (Mongolian jird).